A 101-amino-acid chain; its full sequence is uncharacterized protein (101 aa).

This is an uncharacterized protein from Homo sapiens (Human).